Consider the following 130-residue polypeptide: Small ribosomal subunit protein uS9 (130 aa).

This sequence belongs to the universal ribosomal protein uS9 family.

This chain is Small ribosomal subunit protein uS9, found in Delftia acidovorans (strain DSM 14801 / SPH-1).